The following is a 258-amino-acid chain: Alcohol dehydrogenase 2 (258 aa).

An NAD(+)-binding site is contributed by 9–33 (IFVGGLGFIGYEACKQLMAKNMASF). Ser137 provides a ligand contact to substrate. Tyr150 acts as the Proton acceptor in catalysis.

The protein belongs to the short-chain dehydrogenases/reductases (SDR) family. As to quaternary structure, homodimer.

The catalysed reaction is a primary alcohol + NAD(+) = an aldehyde + NADH + H(+). It catalyses the reaction a secondary alcohol + NAD(+) = a ketone + NADH + H(+). In Ceratitis rosa (Natal fruit fly), this protein is Alcohol dehydrogenase 2 (ADH2).